We begin with the raw amino-acid sequence, 166 residues long: Crossover junction endodeoxyribonuclease RuvC (166 aa).

Catalysis depends on residues aspartate 7, glutamate 67, and aspartate 140. The Mg(2+) site is built by aspartate 7, glutamate 67, and aspartate 140.

The protein belongs to the RuvC family. Homodimer which binds Holliday junction (HJ) DNA. The HJ becomes 2-fold symmetrical on binding to RuvC with unstacked arms; it has a different conformation from HJ DNA in complex with RuvA. In the full resolvosome a probable DNA-RuvA(4)-RuvB(12)-RuvC(2) complex forms which resolves the HJ. It depends on Mg(2+) as a cofactor.

The protein resides in the cytoplasm. It catalyses the reaction Endonucleolytic cleavage at a junction such as a reciprocal single-stranded crossover between two homologous DNA duplexes (Holliday junction).. Functionally, the RuvA-RuvB-RuvC complex processes Holliday junction (HJ) DNA during genetic recombination and DNA repair. Endonuclease that resolves HJ intermediates. Cleaves cruciform DNA by making single-stranded nicks across the HJ at symmetrical positions within the homologous arms, yielding a 5'-phosphate and a 3'-hydroxyl group; requires a central core of homology in the junction. The consensus cleavage sequence is 5'-(A/T)TT(C/G)-3'. Cleavage occurs on the 3'-side of the TT dinucleotide at the point of strand exchange. HJ branch migration catalyzed by RuvA-RuvB allows RuvC to scan DNA until it finds its consensus sequence, where it cleaves and resolves the cruciform DNA. The chain is Crossover junction endodeoxyribonuclease RuvC from Ruminiclostridium cellulolyticum (strain ATCC 35319 / DSM 5812 / JCM 6584 / H10) (Clostridium cellulolyticum).